Consider the following 229-residue polypeptide: Cytochrome c oxidase subunit 2 (229 aa).

Residues 1-26 (MATWAQLNFQDAASPMMEQLHYFHDH) lie on the Mitochondrial intermembrane side of the membrane. A helical membrane pass occupies residues 27-48 (TMMVLVIITIMVAYIMGTMFFN). The Mitochondrial matrix segment spans residues 49–62 (KDVNRYLLDGQKIE). A helical membrane pass occupies residues 63–82 (TEWTIVPVFVLVIIAMPSLR). The Mitochondrial intermembrane segment spans residues 83 to 229 (LLYLLDEVNE…INWIQNMSEA (147 aa)). Residues His-161, Cys-196, Glu-198, Cys-200, His-204, and Met-207 each contribute to the Cu cation site. Glu-198 is a Mg(2+) binding site.

The protein belongs to the cytochrome c oxidase subunit 2 family. Component of the cytochrome c oxidase (complex IV, CIV), a multisubunit enzyme composed of a catalytic core of 3 subunits and several supernumerary subunits. The complex exists as a monomer or a dimer and forms supercomplexes (SCs) in the inner mitochondrial membrane with ubiquinol-cytochrome c oxidoreductase (cytochrome b-c1 complex, complex III, CIII). It depends on Cu cation as a cofactor.

It localises to the mitochondrion inner membrane. The catalysed reaction is 4 Fe(II)-[cytochrome c] + O2 + 8 H(+)(in) = 4 Fe(III)-[cytochrome c] + 2 H2O + 4 H(+)(out). In terms of biological role, component of the cytochrome c oxidase, the last enzyme in the mitochondrial electron transport chain which drives oxidative phosphorylation. The respiratory chain contains 3 multisubunit complexes succinate dehydrogenase (complex II, CII), ubiquinol-cytochrome c oxidoreductase (cytochrome b-c1 complex, complex III, CIII) and cytochrome c oxidase (complex IV, CIV), that cooperate to transfer electrons derived from NADH and succinate to molecular oxygen, creating an electrochemical gradient over the inner membrane that drives transmembrane transport and the ATP synthase. Cytochrome c oxidase is the component of the respiratory chain that catalyzes the reduction of oxygen to water. Electrons originating from reduced cytochrome c in the intermembrane space (IMS) are transferred via the dinuclear copper A center (CU(A)) of subunit 2 and heme A of subunit 1 to the active site in subunit 1, a binuclear center (BNC) formed by heme A3 and copper B (CU(B)). The BNC reduces molecular oxygen to 2 water molecules using 4 electrons from cytochrome c in the IMS and 4 protons from the mitochondrial matrix. The protein is Cytochrome c oxidase subunit 2 (COII) of Sympetrum striolatum (Common darter dragonfly).